The chain runs to 59 residues: Large ribosomal subunit protein uL30 (59 aa).

This sequence belongs to the universal ribosomal protein uL30 family. As to quaternary structure, part of the 50S ribosomal subunit.

The protein is Large ribosomal subunit protein uL30 of Leptospira biflexa serovar Patoc (strain Patoc 1 / ATCC 23582 / Paris).